A 480-amino-acid chain; its full sequence is UDP-N-acetylmuramate--L-alanine ligase (480 aa).

115–121 (GTHGKTT) provides a ligand contact to ATP.

This sequence belongs to the MurCDEF family.

The protein resides in the cytoplasm. It catalyses the reaction UDP-N-acetyl-alpha-D-muramate + L-alanine + ATP = UDP-N-acetyl-alpha-D-muramoyl-L-alanine + ADP + phosphate + H(+). It functions in the pathway cell wall biogenesis; peptidoglycan biosynthesis. In terms of biological role, cell wall formation. The protein is UDP-N-acetylmuramate--L-alanine ligase of Gluconacetobacter diazotrophicus (strain ATCC 49037 / DSM 5601 / CCUG 37298 / CIP 103539 / LMG 7603 / PAl5).